We begin with the raw amino-acid sequence, 216 residues long: Uracil phosphoribosyltransferase (216 aa).

Residues R85, R110, and 135-143 (DPMVATGYS) contribute to the 5-phospho-alpha-D-ribose 1-diphosphate site. Uracil-binding positions include I200 and 205–207 (GDA). D206 serves as a coordination point for 5-phospho-alpha-D-ribose 1-diphosphate.

It belongs to the UPRTase family. It depends on Mg(2+) as a cofactor.

It carries out the reaction UMP + diphosphate = 5-phospho-alpha-D-ribose 1-diphosphate + uracil. Its pathway is pyrimidine metabolism; UMP biosynthesis via salvage pathway; UMP from uracil: step 1/1. Allosterically activated by GTP. Its function is as follows. Catalyzes the conversion of uracil and 5-phospho-alpha-D-ribose 1-diphosphate (PRPP) to UMP and diphosphate. The protein is Uracil phosphoribosyltransferase of Burkholderia lata (strain ATCC 17760 / DSM 23089 / LMG 22485 / NCIMB 9086 / R18194 / 383).